Here is a 65-residue protein sequence, read N- to C-terminus: Alpha-like toxin Bom4 (65 aa).

The 63-residue stretch at 2-64 (RDAYIAQPEN…VPIRIPGKCH (63 aa)) folds into the LCN-type CS-alpha/beta domain. Disulfide bonds link Cys12–Cys63, Cys16–Cys36, Cys22–Cys46, and Cys26–Cys48.

The protein belongs to the long (4 C-C) scorpion toxin superfamily. Sodium channel inhibitor family. Alpha subfamily. Expressed by the venom gland.

The protein localises to the secreted. Functionally, alpha toxins bind voltage-independently at site-3 of sodium channels (Nav) and inhibit the inactivation of the activated channels, thereby blocking neuronal transmission. This alpha-like toxin is highly toxic to mice and insects. This chain is Alpha-like toxin Bom4, found in Buthus occitanus mardochei (Moroccan scorpion).